The sequence spans 137 residues: MLQPKRTKFRKVHKGRNTGLAHRGSTVSFGSIAIKATERGRMTARQIEAARRAISRRIKRGGKIFIRVFPDKPITEKPLEVRMGNGKGNVEYWVCEIKPGKILYEIEGVNEDLAREAFALAAAKLPFKTTIVTRTVM.

The protein belongs to the universal ribosomal protein uL16 family. Part of the 50S ribosomal subunit.

Functionally, binds 23S rRNA and is also seen to make contacts with the A and possibly P site tRNAs. This is Large ribosomal subunit protein uL16 from Acinetobacter baumannii (strain SDF).